We begin with the raw amino-acid sequence, 829 residues long: Periplasmic nitrate reductase (829 aa).

The segment at residues 1-30 (MKMTRRAFVKANAAASAAAVAGITLPASAA) is a signal peptide (tat-type signal). A 4Fe-4S Mo/W bis-MGD-type domain is found at 41–97 (ITWDKAPCRFCGTGCSVLVGTQNGKVVATQGDPEAPVNKGLNCIKGYFLSKIMYGQD). [4Fe-4S] cluster-binding residues include Cys-48, Cys-51, Cys-55, and Cys-83. Mo-bis(molybdopterin guanine dinucleotide) contacts are provided by residues Lys-85, Gln-152, Asn-177, Cys-181, 214 to 221 (WGSNMAEM), 245 to 249 (STYYH), 264 to 266 (QSD), Met-374, Gln-378, Asn-484, 510 to 511 (SD), Lys-533, Asp-560, and 718 to 727 (TGRVLEHWHT). A substrate-binding site is contributed by Phe-794. The Mo-bis(molybdopterin guanine dinucleotide) site is built by Asn-802 and Lys-819.

It belongs to the prokaryotic molybdopterin-containing oxidoreductase family. NasA/NapA/NarB subfamily. In terms of assembly, component of the periplasmic nitrate reductase NapAB complex composed of NapA and NapB. It depends on [4Fe-4S] cluster as a cofactor. Mo-bis(molybdopterin guanine dinucleotide) is required as a cofactor. Predicted to be exported by the Tat system. The position of the signal peptide cleavage has not been experimentally proven.

The protein localises to the periplasm. It catalyses the reaction 2 Fe(II)-[cytochrome] + nitrate + 2 H(+) = 2 Fe(III)-[cytochrome] + nitrite + H2O. In terms of biological role, catalytic subunit of the periplasmic nitrate reductase complex NapAB. Receives electrons from NapB and catalyzes the reduction of nitrate to nitrite. In Vibrio vulnificus (strain YJ016), this protein is Periplasmic nitrate reductase.